Here is a 238-residue protein sequence, read N- to C-terminus: Uridylate kinase (238 aa).

12–15 (KLSG) provides a ligand contact to ATP. Gly54 contacts UMP. Positions 55 and 59 each coordinate ATP. UMP contacts are provided by residues Asp74 and 135-142 (TGNPFFTT). ATP-binding residues include Thr162, Tyr168, and Asp171.

This sequence belongs to the UMP kinase family. In terms of assembly, homohexamer.

The protein resides in the cytoplasm. It carries out the reaction UMP + ATP = UDP + ADP. The protein operates within pyrimidine metabolism; CTP biosynthesis via de novo pathway; UDP from UMP (UMPK route): step 1/1. Inhibited by UTP. Its function is as follows. Catalyzes the reversible phosphorylation of UMP to UDP. This Methylobacillus flagellatus (strain ATCC 51484 / DSM 6875 / VKM B-1610 / KT) protein is Uridylate kinase.